Consider the following 1878-residue polypeptide: DNA polymerase (1878 aa).

Disordered regions lie at residues 691 to 727 and 1839 to 1878; these read LFQADDDDDDDDEDEDDGLLDERQQDSAEDMKKKGPN and TQDDVVKKKRAPKRAAIDRKSGSGGKKSKITAGKTAGTMF. Over residues 694–709 the composition is skewed to acidic residues; it reads ADDDDDDDDEDEDDGL. Basic and acidic residues predominate over residues 710–723; sequence LDERQQDSAEDMKK. Positions 1868–1878 are enriched in low complexity; sequence ITAGKTAGTMF.

Belongs to the DNA polymerase type-B family.

It carries out the reaction DNA(n) + a 2'-deoxyribonucleoside 5'-triphosphate = DNA(n+1) + diphosphate. The sequence is that of DNA polymerase from Magallana gigas (Pacific oyster).